The following is a 350-amino-acid chain: S-adenosylmethionine:tRNA ribosyltransferase-isomerase (350 aa).

It belongs to the QueA family. Monomer.

The protein localises to the cytoplasm. The catalysed reaction is 7-aminomethyl-7-carbaguanosine(34) in tRNA + S-adenosyl-L-methionine = epoxyqueuosine(34) in tRNA + adenine + L-methionine + 2 H(+). It participates in tRNA modification; tRNA-queuosine biosynthesis. Transfers and isomerizes the ribose moiety from AdoMet to the 7-aminomethyl group of 7-deazaguanine (preQ1-tRNA) to give epoxyqueuosine (oQ-tRNA). The sequence is that of S-adenosylmethionine:tRNA ribosyltransferase-isomerase from Bacillus cytotoxicus (strain DSM 22905 / CIP 110041 / 391-98 / NVH 391-98).